Here is a 1755-residue protein sequence, read N- to C-terminus: Transposon Ty1-NL1 Gag-Pol polyprotein (1755 aa).

Composition is skewed to polar residues over residues 1-23 (MESQQLSQHSPISHGSACASVTS), 48-60 (TKANSQQTTTPAS), 71-86 (SPQTAQSHSPQNGPYQ), and 131-152 (PQYPSSVGTPLSTPSPESGNTF). 3 disordered regions span residues 1–86 (MESQ…GPYQ), 131–171 (PQYP…YVRP), and 350–420 (QQES…IRGS). A compositionally biased stretch (low complexity) spans 153 to 165 (TDSSSADSDMTST). Residues 299–401 (NNGIPINNKV…NSQSRTARAH (103 aa)) are RNA-binding. Over residues 363–372 (NPSDEKKDSR) the composition is skewed to basic and acidic residues. Residues 373-412 (TYTNTTKPKSITRNSQKPNNSQSRTARAHNVSTSNNSSGP) show a composition bias toward polar residues. Residue Asp461 is the For protease activity; shared with dimeric partner of the active site. The tract at residues 583 to 640 (NVHTSESTRKYPYPFIHRMLAHANAQTIRYSLKNNTITYFNESDVDWSSAIDYQCPDC) is integrase-type zinc finger-like. The Integrase catalytic domain maps to 660-835 (NSYEPFQYLH…AGLDISTLLP (176 aa)). The Mg(2+) site is built by Asp671 and Asp736. Disordered regions lie at residues 956–1120 (SKAV…TCPK) and 1146–1172 (DSFKELPPINSRQTNSSLGGIGDSNAY). The segment covering 960-969 (SPTDSTPPST) has biased composition (low complexity). Over residues 1005-1015 (STPQISDIEST) the composition is skewed to polar residues. The span at 1038-1053 (ESSHTSKSKDFRHSDS) shows a compositional bias: basic and acidic residues. Polar residues-rich tracts occupy residues 1054 to 1082 (YSDNETNHTNVPISSTGGTNNKTVPQTSE) and 1095 to 1106 (SIDTSSSESNSL). The short motif at 1178–1212 (KKRSLEDNETEIKVSRDTWNTKNMRSLEPPRSKKR) is the Bipartite nuclear localization signal element. The Reverse transcriptase Ty1/copia-type domain maps to 1338 to 1476 (NNYYITQLDI…DILGLEIKYQ (139 aa)). Mg(2+) contacts are provided by Asp1346, Asp1427, Asp1428, Asp1610, Glu1652, and Asp1685. The RNase H Ty1/copia-type domain maps to 1610 to 1752 (DASYGNQPYY…IKTFKLLTNK (143 aa)).

As to quaternary structure, the capsid protein forms a homotrimer, from which the VLPs are assembled. The protease is a homodimer, whose active site consists of two apposed aspartic acid residues. Initially, virus-like particles (VLPs) are composed of the structural unprocessed proteins Gag and Gag-Pol, and also contain the host initiator methionine tRNA (tRNA(i)-Met) which serves as a primer for minus-strand DNA synthesis, and a dimer of genomic Ty RNA. Processing of the polyproteins occurs within the particle and proceeds by an ordered pathway, called maturation. First, the protease (PR) is released by autocatalytic cleavage of the Gag-Pol polyprotein yielding capsid protein p45 and a Pol-p154 precursor protein. This cleavage is a prerequisite for subsequent processing of Pol-p154 at the remaining sites to release the mature structural and catalytic proteins. Maturation takes place prior to the RT reaction and is required to produce transposition-competent VLPs.

It is found in the cytoplasm. It localises to the nucleus. The enzyme catalyses DNA(n) + a 2'-deoxyribonucleoside 5'-triphosphate = DNA(n+1) + diphosphate. It carries out the reaction Endonucleolytic cleavage to 5'-phosphomonoester.. In terms of biological role, capsid protein (CA) is the structural component of the virus-like particle (VLP), forming the shell that encapsulates the retrotransposons dimeric RNA genome. The particles are assembled from trimer-clustered units and there are holes in the capsid shells that allow for the diffusion of macromolecules. CA also has nucleocapsid-like chaperone activity, promoting primer tRNA(i)-Met annealing to the multipartite primer-binding site (PBS), dimerization of Ty1 RNA and initiation of reverse transcription. Its function is as follows. The aspartyl protease (PR) mediates the proteolytic cleavages of the Gag and Gag-Pol polyproteins after assembly of the VLP. Functionally, reverse transcriptase/ribonuclease H (RT) is a multifunctional enzyme that catalyzes the conversion of the retro-elements RNA genome into dsDNA within the VLP. The enzyme displays a DNA polymerase activity that can copy either DNA or RNA templates, and a ribonuclease H (RNase H) activity that cleaves the RNA strand of RNA-DNA heteroduplexes during plus-strand synthesis and hydrolyzes RNA primers. The conversion leads to a linear dsDNA copy of the retrotransposon that includes long terminal repeats (LTRs) at both ends. Integrase (IN) targets the VLP to the nucleus, where a subparticle preintegration complex (PIC) containing at least integrase and the newly synthesized dsDNA copy of the retrotransposon must transit the nuclear membrane. Once in the nucleus, integrase performs the integration of the dsDNA into the host genome. The sequence is that of Transposon Ty1-NL1 Gag-Pol polyprotein (TY1B-NL1) from Saccharomyces cerevisiae (strain ATCC 204508 / S288c) (Baker's yeast).